Here is a 658-residue protein sequence, read N- to C-terminus: Probable CoA ligase CCL6 (658 aa).

ATP-binding positions include 226 to 234, 411 to 416, aspartate 497, 509 to 512, and lysine 632; these read TSGATGEPK, QGYGLT, and IIDR. An SBD1 region spans residues 298–411; it reads DIRFLMDDLQ…RVTSCAALSQ (114 aa). An SBD2 region spans residues 412 to 477; it reads GYGLTESCGG…LRGTTLFSGY (66 aa).

This sequence belongs to the ATP-dependent AMP-binding enzyme family. In terms of tissue distribution, mostly expressed in glandular trichomes (lupulin glands) after flowering, and, to a lower extent, in stems, leaves, cones and flowers.

It is found in the cytoplasm. Its subcellular location is the cytosol. This is Probable CoA ligase CCL6 from Humulus lupulus (European hop).